The following is a 207-amino-acid chain: PITH domain-containing protein P35G2.02 (207 aa).

The region spanning 13 to 189 (EHPFESGPND…PVVTIYEATP (177 aa)) is the PITH domain.

This sequence belongs to the PITHD1 family.

It localises to the cytoplasm. The protein localises to the nucleus. The chain is PITH domain-containing protein P35G2.02 from Schizosaccharomyces pombe (strain 972 / ATCC 24843) (Fission yeast).